We begin with the raw amino-acid sequence, 396 residues long: Purine ribonucleoside efflux pump NepI (396 aa).

Topologically, residues 1–21 are cytoplasmic; the sequence is MSEFIAENRGADAITRPNWSA. The chain crosses the membrane as a helical span at residues 22–42; sequence VFSVAFCVACLIIVEFLPVSL. Residues 43-54 are Periplasmic-facing; it reads LTPMAQDLGISE. Residues 55-75 form a helical membrane-spanning segment; the sequence is GVAGQSVTVTAFVAMFASLFI. Residues 76–85 lie on the Cytoplasmic side of the membrane; it reads TQTIQATDRR. The chain crosses the membrane as a helical span at residues 86–106; that stretch reads YVVILFAVLLTLSCLLVSFAN. Residue serine 107 is a topological domain, periplasmic. A helical transmembrane segment spans residues 108–128; it reads FSLLLIGRACLGLALGGFWAM. Residues 129–147 lie on the Cytoplasmic side of the membrane; it reads SASLTMRLVPPRTVPKALS. The chain crosses the membrane as a helical span at residues 148–168; that stretch reads VIFGAVSIALVIAAPLGSFLG. The Periplasmic portion of the chain corresponds to 169–175; the sequence is ELIGWRN. Residues 176 to 196 traverse the membrane as a helical segment; the sequence is VFNAAAAMGVLCIFWIIKSLP. The Cytoplasmic segment spans residues 197 to 215; the sequence is SLPGEPSHQKQNTFRLLQR. A helical membrane pass occupies residues 216-236; that stretch reads PGVMAGMIAIFMSFAGQFAFF. At 237–255 the chain is on the periplasmic side; sequence TYIRPVYMNLAGFGVDGLT. Residues 256–276 traverse the membrane as a helical segment; sequence LVLLSFGIASFVGTSLSSFIL. Residues 277-281 lie on the Cytoplasmic side of the membrane; that stretch reads KRSVK. The helical transmembrane segment at 282–302 threads the bilayer; that stretch reads LALAGAPFVLALSALVLTLWG. Over 303 to 305 the chain is Periplasmic; sequence SDK. A helical transmembrane segment spans residues 306-326; it reads IVATGVAIIWGLTFALIPVGW. The Cytoplasmic segment spans residues 327 to 343; it reads STWITRSLADQAEKAGS. The chain crosses the membrane as a helical span at residues 344 to 364; the sequence is IQVAVIQLANTCGAAIGGYAL. Residues 365-366 are Periplasmic-facing; the sequence is DN. The helical transmembrane segment at 367–387 threads the bilayer; that stretch reads IGLTSPLMLSGTLMLLTALLV. The Cytoplasmic portion of the chain corresponds to 388–396; the sequence is TAKVKMKKS.

The protein belongs to the major facilitator superfamily. DHA1 family. NepI (TC 2.A.1.2.26) subfamily.

The protein resides in the cell inner membrane. It catalyses the reaction inosine(in) + H(+)(out) = inosine(out) + H(+)(in). The enzyme catalyses guanosine(in) + H(+)(out) = guanosine(out) + H(+)(in). Functionally, involved in the efflux of purine ribonucleosides, such as inosine and guanosine. In Escherichia coli O1:K1 / APEC, this protein is Purine ribonucleoside efflux pump NepI.